A 324-amino-acid chain; its full sequence is Zinc finger C2HC domain-containing protein 1A (324 aa).

Residues 15 to 44 (ELLPCKICGRTFFPVALKKHGPICKKTATK) form a C2HC/C3H-type 1 zinc finger. Zn(2+) contacts are provided by cysteine 19, cysteine 22, histidine 34, and cysteine 38. Residues 43–83 (TKKRKTFDSSRQRAEGTDIPTVKPLKPRPEPPKKPSNWRRK) form a disordered region. Residues 48 to 58 (TFDSSRQRAEG) show a composition bias toward basic and acidic residues. The segment at 118–147 (DYIQCPYCQRRFNENAADRHINFCKEQAAR) adopts a C2HC/C3H-type 2 zinc-finger fold. Residues cysteine 122, cysteine 125, histidine 137, and cysteine 141 each contribute to the Zn(2+) site. Disordered stretches follow at residues 150-224 (NKGK…LSPS) and 236-259 (NVKP…LTNK). Low complexity-rich tracts occupy residues 176–187 (SNSPGTASSGSS) and 196–215 (GKTV…SSLG). Serine 222 carries the post-translational modification Phosphoserine. A Phosphothreonine modification is found at threonine 243. Serine 291 carries the phosphoserine modification.

This sequence belongs to the ZC2HC1 family. Zn(2+) is required as a cofactor.

The protein is Zinc finger C2HC domain-containing protein 1A (ZC2HC1A) of Pongo abelii (Sumatran orangutan).